The chain runs to 1435 residues: DNA polymerase III PolC-type (1435 aa).

One can recognise an Exonuclease domain in the interval 420-576 (YVVFDVETTG…YDTEATAYIF (157 aa)).

The protein belongs to the DNA polymerase type-C family. PolC subfamily.

The protein resides in the cytoplasm. The catalysed reaction is DNA(n) + a 2'-deoxyribonucleoside 5'-triphosphate = DNA(n+1) + diphosphate. In terms of biological role, required for replicative DNA synthesis. This DNA polymerase also exhibits 3' to 5' exonuclease activity. The polypeptide is DNA polymerase III PolC-type (Staphylococcus aureus).